Here is a 303-residue protein sequence, read N- to C-terminus: Putative monooxygenase p33MONOX (303 aa).

Disordered regions lie at residues 1–20 (MASRQPEVPALAPSGPLGKM), 37–56 (LEDPAPMTPPPSDMGSIPWK), 66–96 (HLDKTEEGAASVSSLAVTPSPATDSSDKAPV), 156–233 (KLQS…LQKS), and 260–283 (RVGEDPATFKPPKMDVPMVEGKKQ). The residue at position 44 (T44) is a Phosphothreonine. A Flavin-containing monooxygenase motif motif is present at residues 67-77 (LDKTEEGAASV). Polar residues predominate over residues 76–89 (SVSSLAVTPSPATD). Low complexity predominate over residues 170–183 (ASAQSTPSSTPHAS). T175 carries the phosphothreonine modification. The residue at position 183 (S183) is a Phosphoserine.

It belongs to the P33MONOX family. In terms of assembly, interacts with NELFB, NOL12 and PRNP. Expressed in neuronal pyramidal cells of the hippocampus and in the neurons of the cortex.

It localises to the cytoplasm. In terms of biological role, potential NADPH-dependent oxidoreductase. May be involved in the regulation of neuronal survival, differentiation and axonal outgrowth. This Mus musculus (Mouse) protein is Putative monooxygenase p33MONOX (P33monox).